The primary structure comprises 323 residues: Beta-ketoacyl-[acyl-carrier-protein] synthase III (323 aa).

Active-site residues include Cys113 and His250. The ACP-binding stretch occupies residues Gln251–Arg255. Asn280 is an active-site residue.

Belongs to the thiolase-like superfamily. FabH family. As to quaternary structure, homodimer.

The protein localises to the cytoplasm. It catalyses the reaction malonyl-[ACP] + acetyl-CoA + H(+) = 3-oxobutanoyl-[ACP] + CO2 + CoA. It functions in the pathway lipid metabolism; fatty acid biosynthesis. Its function is as follows. Catalyzes the condensation reaction of fatty acid synthesis by the addition to an acyl acceptor of two carbons from malonyl-ACP. Catalyzes the first condensation reaction which initiates fatty acid synthesis and may therefore play a role in governing the total rate of fatty acid production. Possesses both acetoacetyl-ACP synthase and acetyl transacylase activities. Its substrate specificity determines the biosynthesis of branched-chain and/or straight-chain of fatty acids. The protein is Beta-ketoacyl-[acyl-carrier-protein] synthase III of Brucella melitensis biotype 2 (strain ATCC 23457).